The primary structure comprises 131 residues: Profilin LP04 (131 aa).

Belongs to the profilin family. In terms of assembly, occurs in many kinds of cells as a complex with monomeric actin in a 1:1 ratio.

Its subcellular location is the cytoplasm. It is found in the cytoskeleton. In terms of biological role, binds to actin and affects the structure of the cytoskeleton. At high concentrations, profilin prevents the polymerization of actin, whereas it enhances it at low concentrations. By binding to PIP2, it inhibits the formation of IP3 and DG. This Oryza sativa subsp. indica (Rice) protein is Profilin LP04.